The primary structure comprises 244 residues: Probable H/ACA ribonucleoprotein complex subunit 1-like protein (244 aa).

2 disordered regions span residues 1 to 53 (MSFR…GGYD) and 145 to 244 (FLPQ…TKFE). RGG-box regions lie at residues 4–51 (RGGR…GRGG) and 153–222 (RGRG…RGRG). Residues 160-173 (RGGDRGGRGSDRGG) are compositionally biased toward basic and acidic residues. 2 stretches are compositionally biased toward gly residues: residues 174–201 (RGGFGRGGGGGFRGGDRGGFGGGRGGFR) and 208–217 (FRGGRGGDFG). The span at 218 to 228 (GRGRGDFKRSY) shows a compositional bias: basic and acidic residues.

This sequence belongs to the GAR1 family. Component of the small nucleolar ribonucleoprotein particle containing H/ACA-type snoRNAs (H/ACA snoRNPs).

Its subcellular location is the nucleus. It is found in the nucleolus. In terms of biological role, required for ribosome biogenesis. Part of a complex which catalyzes pseudouridylation of rRNA. This involves the isomerization of uridine such that the ribose is subsequently attached to C5, instead of the normal N1. Pseudouridine ('psi') residues may serve to stabilize the conformation of rRNAs. Involved in phase separation into sub-nucleolar condensates. Essential for normal development and also plays a role in fertility. The sequence is that of Probable H/ACA ribonucleoprotein complex subunit 1-like protein from Caenorhabditis elegans.